Reading from the N-terminus, the 310-residue chain is Elongation factor Ts (310 aa).

The interval 80–83 is involved in Mg(2+) ion dislocation from EF-Tu; it reads TDFV.

This sequence belongs to the EF-Ts family.

Its subcellular location is the cytoplasm. Associates with the EF-Tu.GDP complex and induces the exchange of GDP to GTP. It remains bound to the aminoacyl-tRNA.EF-Tu.GTP complex up to the GTP hydrolysis stage on the ribosome. The protein is Elongation factor Ts of Beijerinckia indica subsp. indica (strain ATCC 9039 / DSM 1715 / NCIMB 8712).